The chain runs to 656 residues: Methionine--tRNA ligase (656 aa).

Positions 13–23 (YYPSGNLHIGH) match the 'HIGH' region motif. A 'KMSKS' region motif is present at residues 308–312 (KMSKS). Lys-311 serves as a coordination point for ATP. The tRNA-binding domain maps to 556 to 656 (DFDKVEIKAA…SAIPNGAVIK (101 aa)).

It belongs to the class-I aminoacyl-tRNA synthetase family. MetG type 2B subfamily. As to quaternary structure, homodimer.

The protein localises to the cytoplasm. It catalyses the reaction tRNA(Met) + L-methionine + ATP = L-methionyl-tRNA(Met) + AMP + diphosphate. In terms of biological role, is required not only for elongation of protein synthesis but also for the initiation of all mRNA translation through initiator tRNA(fMet) aminoacylation. In Staphylococcus epidermidis (strain ATCC 12228 / FDA PCI 1200), this protein is Methionine--tRNA ligase.